The primary structure comprises 232 residues: Orotidine 5'-phosphate decarboxylase (232 aa).

Residues D11, K33, 60–69 (DLKFHDIPHT), T119, R180, Q189, G209, and R210 contribute to the substrate site. K62 acts as the Proton donor in catalysis.

It belongs to the OMP decarboxylase family. Type 1 subfamily. As to quaternary structure, homodimer.

The enzyme catalyses orotidine 5'-phosphate + H(+) = UMP + CO2. The protein operates within pyrimidine metabolism; UMP biosynthesis via de novo pathway; UMP from orotate: step 2/2. Its function is as follows. Catalyzes the decarboxylation of orotidine 5'-monophosphate (OMP) to uridine 5'-monophosphate (UMP). The chain is Orotidine 5'-phosphate decarboxylase from Nitrosococcus oceani (strain ATCC 19707 / BCRC 17464 / JCM 30415 / NCIMB 11848 / C-107).